A 100-amino-acid chain; its full sequence is Large ribosomal subunit protein bL27 (100 aa).

The propeptide occupies 1–9 (MLSINLSLC).

It belongs to the bacterial ribosomal protein bL27 family. In terms of processing, the N-terminus is cleaved by ribosomal processing cysteine protease Prp.

This chain is Large ribosomal subunit protein bL27, found in Clostridium acetobutylicum (strain ATCC 824 / DSM 792 / JCM 1419 / IAM 19013 / LMG 5710 / NBRC 13948 / NRRL B-527 / VKM B-1787 / 2291 / W).